We begin with the raw amino-acid sequence, 1368 residues long: DNA-directed RNA polymerase subunit beta (1368 aa).

Belongs to the RNA polymerase beta chain family. In terms of assembly, the RNAP catalytic core consists of 2 alpha, 1 beta, 1 beta' and 1 omega subunit. When a sigma factor is associated with the core the holoenzyme is formed, which can initiate transcription.

It catalyses the reaction RNA(n) + a ribonucleoside 5'-triphosphate = RNA(n+1) + diphosphate. In terms of biological role, DNA-dependent RNA polymerase catalyzes the transcription of DNA into RNA using the four ribonucleoside triphosphates as substrates. This chain is DNA-directed RNA polymerase subunit beta, found in Legionella pneumophila (strain Lens).